We begin with the raw amino-acid sequence, 393 residues long: Nucleosome assembly protein 1-like 1-B (393 aa).

The span at 1 to 10 shows a compositional bias: basic and acidic residues; sequence MANIDNKEQT. The interval 1–38 is disordered; that stretch reads MANIDNKEQTELDQQDMEDVEDVEEEETGEEANSKARQ. Residues 11-30 are compositionally biased toward acidic residues; it reads ELDQQDMEDVEDVEEEETGE. The NAP1L motif signature appears at 126 to 151; that stretch reads YEPTEEECEWKVDEEEDIAEDLKEKA. Residues 274–280 carry the Nuclear localization signal motif; the sequence is IKKKQKH. Positions 347-377 are enriched in acidic residues; that stretch reads AIEDDDDDYDEEGEEADDEEGEEEADEDHDP. The disordered stretch occupies residues 347-393; that stretch reads AIEDDDDDYDEEGEEADDEEGEEEADEDHDPDFDPKKAQNPAECKQQ.

This sequence belongs to the nucleosome assembly protein (NAP) family. Forms homomultimers. Interacts with histone b4. Interacts with the B-type cyclins ccnb1 and ccnb2. Phosphorylated by cyclin B-cdc2 kinase complexes.

It localises to the cytoplasm. The protein localises to the nucleus. Acts as a chaperone for the linker histone to facilitate deposition of histone B4 onto linker DNA. Required for both remodeling of sperm chromatin into nucleosomes, and linker histone binding to nucleosome core dimers. Plays a role in tissue-specific gene regulation. Required for primitive hemopoiesis, acting upstream of tal1/scl. The protein is Nucleosome assembly protein 1-like 1-B (nap1l1-b) of Xenopus laevis (African clawed frog).